The following is a 449-amino-acid chain: Probable phosphoglucosamine mutase (449 aa).

Serine 96 (phosphoserine intermediate) is an active-site residue. Residues serine 96, aspartate 233, aspartate 235, and aspartate 237 each contribute to the Mg(2+) site. Serine 96 is modified (phosphoserine).

It belongs to the phosphohexose mutase family. Requires Mg(2+) as cofactor. Post-translationally, activated by phosphorylation.

It carries out the reaction alpha-D-glucosamine 1-phosphate = D-glucosamine 6-phosphate. Its function is as follows. Catalyzes the conversion of glucosamine-6-phosphate to glucosamine-1-phosphate. The chain is Probable phosphoglucosamine mutase from Thermococcus gammatolerans (strain DSM 15229 / JCM 11827 / EJ3).